Here is a 574-residue protein sequence, read N- to C-terminus: Actin-binding protein wsp1 (574 aa).

Positions isoleucine 19–proline 130 constitute a WH1 domain. Disordered stretches follow at residues lysine 144–asparagine 186, alanine 221–leucine 494, and lysine 517–aspartate 574. Over residues histidine 149–proline 158 the composition is skewed to polar residues. Composition is skewed to pro residues over residues proline 230–arginine 240 and proline 251–serine 260. Low complexity-rich tracts occupy residues serine 297–alanine 306 and lysine 324–serine 335. Positions proline 352–serine 368 are enriched in pro residues. Serine 386 is subject to Phosphoserine. Residues proline 415–alanine 485 are compositionally biased toward pro residues. A WH2 domain is found at glycine 499 to serine 518. Over residues valine 521–leucine 545 the composition is skewed to polar residues. Residues serine 563–aspartate 574 are compositionally biased toward acidic residues.

In terms of assembly, interacts with vrp1.

The protein localises to the cytoplasm. Its subcellular location is the cytoskeleton. Has a role in regulating actin assembly, so regulating polarized growth. The polypeptide is Actin-binding protein wsp1 (wsp1) (Schizosaccharomyces pombe (strain 972 / ATCC 24843) (Fission yeast)).